The sequence spans 362 residues: Mannose-1-phosphate guanyltransferase (362 aa).

This sequence belongs to the transferase hexapeptide repeat family.

It is found in the cytoplasm. It catalyses the reaction alpha-D-mannose 1-phosphate + GTP + H(+) = GDP-alpha-D-mannose + diphosphate. The protein operates within nucleotide-sugar biosynthesis; GDP-alpha-D-mannose biosynthesis; GDP-alpha-D-mannose from alpha-D-mannose 1-phosphate (GTP route): step 1/1. Involved in cell wall synthesis where it is required for glycosylation. Involved in cell cycle progression through cell-size checkpoint. This is Mannose-1-phosphate guanyltransferase (MPG1) from Candida albicans (strain SC5314 / ATCC MYA-2876) (Yeast).